Consider the following 281-residue polypeptide: MINGSTKIVGLIGHPVEHSFSPPMHNAAFEELGLDYAYVPFNVCPENLKSAILGAKSLNIKGFNVTIPHKINVMKYLDKLDPIAKLIGAVNTIDFKEMKGYNTDGIGCIKAIGEVTSIKDKNIVVAGAGGASRAISFYLARENPQSIHILNRDINKAKSLAEDLKNSKLTDNVDFDSIDKIVGYVSDADILIDTTPVGMSPHVNDEAIVKAEDMHSDLVVNDIVYNPNETVLLSEAIKAGATPVYGIKMLLYQGAESFEIWTGEKAPVDVMEKTLRKTLDL.

Shikimate contacts are provided by residues 19–21 and threonine 66; that span reads SFS. Lysine 70 (proton acceptor) is an active-site residue. Shikimate-binding residues include asparagine 91 and aspartate 104. NADP(+) contacts are provided by residues 127-131 and isoleucine 223; that span reads GAGGA. Tyrosine 225 contacts shikimate. Glycine 246 lines the NADP(+) pocket.

The protein belongs to the shikimate dehydrogenase family. In terms of assembly, homodimer.

It catalyses the reaction shikimate + NADP(+) = 3-dehydroshikimate + NADPH + H(+). Its pathway is metabolic intermediate biosynthesis; chorismate biosynthesis; chorismate from D-erythrose 4-phosphate and phosphoenolpyruvate: step 4/7. Its function is as follows. Involved in the biosynthesis of the chorismate, which leads to the biosynthesis of aromatic amino acids. Catalyzes the reversible NADPH linked reduction of 3-dehydroshikimate (DHSA) to yield shikimate (SA). The chain is Shikimate dehydrogenase (NADP(+)) from Methanobrevibacter smithii (strain ATCC 35061 / DSM 861 / OCM 144 / PS).